We begin with the raw amino-acid sequence, 260 residues long: Thrombin-like enzyme flavoxobin (260 aa).

A signal peptide spans 1-18; the sequence is MVLIRVLANLLILQLSYA. Residues 19-24 constitute a propeptide that is removed on maturation; the sequence is QKSSEL. The Peptidase S1 domain maps to 25 to 251; sequence VIGGDECNIN…YNAWIQSIIA (227 aa). Cystine bridges form between cysteine 31–cysteine 165, cysteine 52–cysteine 68, cysteine 100–cysteine 258, cysteine 144–cysteine 212, cysteine 176–cysteine 191, and cysteine 202–cysteine 227. Catalysis depends on charge relay system residues histidine 67 and aspartate 112. The active-site Charge relay system is the serine 206.

It belongs to the peptidase S1 family. Snake venom subfamily. Monomer. Expressed by the venom gland.

It localises to the secreted. It catalyses the reaction Selective cleavage of Arg-|-Xaa bond in fibrinogen, to form fibrin, and release fibrinopeptide A. The specificity of further degradation of fibrinogen varies with species origin of the enzyme.. Its activity is regulated as follows. Inhibited by alpha(2)-macroglobulin, diisopropylfluorophosphate (DFP) and PMSF. Low inhibition by tosyl-L-lysine chloromethyl ketone. In terms of biological role, thrombin-like snake venom serine protease that clots fibrinogen (FGA) by releasing fibrinopeptide A. According to PubMed:8585090, only cleaves rabbit fibrinogen, whereas no specificity is described in PubMed:3910643 (tests done on bovine fibrinogen). Also acts as a C3 convertase that independently cleaves human C3 and kick-starts the complement cascade. Also increases urokinase-type plasminogen activator (PLAU) and plasminogen activator inhibitor (SERPINE1) in cultured bovine pulmonary artery endothelial cells. Dose-dependently inhibits collagen-induced platelet aggregation. In Protobothrops flavoviridis (Habu), this protein is Thrombin-like enzyme flavoxobin (TLF1).